The following is a 113-amino-acid chain: Large ribosomal subunit protein bL17 (113 aa).

This sequence belongs to the bacterial ribosomal protein bL17 family. In terms of assembly, part of the 50S ribosomal subunit. Contacts protein L32.

The sequence is that of Large ribosomal subunit protein bL17 from Clostridium botulinum (strain Loch Maree / Type A3).